A 393-amino-acid polypeptide reads, in one-letter code: Chorismate synthase (393 aa).

NADP(+) is bound by residues Arg-40 and Arg-46. FMN-binding positions include 135–137, 257–258, Gly-301, 316–320, and Arg-342; these read RAS, QA, and KPIAT. The disordered stretch occupies residues 280–306; sequence DEIDVGPDGIRRRSNRAGGVEGGMSTG.

The protein belongs to the chorismate synthase family. Homotetramer. Requires FMNH2 as cofactor.

It catalyses the reaction 5-O-(1-carboxyvinyl)-3-phosphoshikimate = chorismate + phosphate. The protein operates within metabolic intermediate biosynthesis; chorismate biosynthesis; chorismate from D-erythrose 4-phosphate and phosphoenolpyruvate: step 7/7. In terms of biological role, catalyzes the anti-1,4-elimination of the C-3 phosphate and the C-6 proR hydrogen from 5-enolpyruvylshikimate-3-phosphate (EPSP) to yield chorismate, which is the branch point compound that serves as the starting substrate for the three terminal pathways of aromatic amino acid biosynthesis. This reaction introduces a second double bond into the aromatic ring system. The protein is Chorismate synthase of Thermobifida fusca (strain YX).